We begin with the raw amino-acid sequence, 289 residues long: Shikimate dehydrogenase (NADP(+)) (289 aa).

Shikimate-binding positions include 19 to 21 and Thr-66; that span reads SLS. The Proton acceptor role is filled by Lys-70. Asn-91 and Asp-106 together coordinate shikimate. Residues 131 to 135 and Leu-229 each bind NADP(+); that span reads GNGGA. Tyr-231 provides a ligand contact to shikimate. An NADP(+)-binding site is contributed by Gly-252.

Belongs to the shikimate dehydrogenase family. In terms of assembly, homodimer.

The enzyme catalyses shikimate + NADP(+) = 3-dehydroshikimate + NADPH + H(+). It functions in the pathway metabolic intermediate biosynthesis; chorismate biosynthesis; chorismate from D-erythrose 4-phosphate and phosphoenolpyruvate: step 4/7. Its function is as follows. Involved in the biosynthesis of the chorismate, which leads to the biosynthesis of aromatic amino acids. Catalyzes the reversible NADPH linked reduction of 3-dehydroshikimate (DHSA) to yield shikimate (SA). The polypeptide is Shikimate dehydrogenase (NADP(+)) (Trichormus variabilis (strain ATCC 29413 / PCC 7937) (Anabaena variabilis)).